The chain runs to 447 residues: Ion-translocating oxidoreductase complex subunit C (447 aa).

4Fe-4S ferredoxin-type domains lie at 359 to 389 and 399 to 430; these read AEVL…GRIA and RCRE…LIRY. 8 residues coordinate [4Fe-4S] cluster: Cys369, Cys372, Cys375, Cys379, Cys408, Cys411, Cys414, and Cys418.

The protein belongs to the 4Fe4S bacterial-type ferredoxin family. RnfC subfamily. As to quaternary structure, the Rnf complex is probably composed of eight subunits, including RnfA, RnfB, RnfC, RnfD, RnfE and RnfG. It depends on [4Fe-4S] cluster as a cofactor.

It is found in the cell membrane. Functionally, part of a membrane-bound complex that couples electron transfer with translocation of ions across the membrane. Catalyzes Na(+) transport, most probably coupled to electron transfer from reduced ferredoxin to methanophenazine and heterodisulfide reductase. Involved in heterodisulfide reduction during methanogenesis from acetate. The sequence is that of Ion-translocating oxidoreductase complex subunit C from Methanosarcina acetivorans (strain ATCC 35395 / DSM 2834 / JCM 12185 / C2A).